We begin with the raw amino-acid sequence, 1131 residues long: Replication factor C subunit 1 (1131 aa).

Disordered regions lie at residues 14 to 87 (KKPV…KSEK), 92 to 111 (YKPG…ETDE), 120 to 201 (AASK…NDEA), and 225 to 378 (ARTL…NYQA). Over residues 38-54 (GVKEAKVNNSGKEDASK) the composition is skewed to basic and acidic residues. K49 is covalently cross-linked (Glycyl lysine isopeptide (Lys-Gly) (interchain with G-Cter in SUMO2)). Y66 is modified (phosphotyrosine). 4 positions are modified to phosphoserine: S68, S70, S72, and S107. T109 bears the Phosphothreonine mark. The segment covering 127–138 (NGVSTNSYLGTS) has biased composition (polar residues). S155 bears the Phosphoserine mark. Phosphothreonine is present on residues T160 and T162. Phosphoserine occurs at positions 163, 172, 189, 244, 250, 253, 281, and 309. The segment covering 184–201 (KRKESSQNTEDSRLNDEA) has biased composition (basic and acidic residues). The segment covering 308–319 (SSPKASAKLALM) has biased composition (low complexity). Composition is skewed to basic and acidic residues over residues 334-350 (AARR…EKTT) and 359-373 (TKRE…EKKR). The interval 354-528 (TKVSPTKRES…KKESESKKCK (175 aa)) is interferon-stimulated-response-element binding region. At S365 the chain carries Phosphoserine. Positions 399-489 (GAENCLEGLT…PGKRSKYEMA (91 aa)) constitute a BRCT domain. Residues 491-525 (EAEMKKEKSKLERTPQKNDQGKRKISPAKKESESK) are disordered. Residue S535 is modified to Phosphoserine. Position 635 to 642 (635 to 642 (GPPGVGKT)) interacts with ATP. The segment at 1073-1131 (PALDSEYSEEFQEDDTQSEKEQDAVETDAMIKKKTRSSKPSKSEREKESKKGKGKNWKK) is disordered. The span at 1078 to 1088 (EYSEEFQEDDT) shows a compositional bias: acidic residues. Phosphoserine is present on S1090. A Nuclear localization signal motif is present at residues 1104 to 1108 (KKKTR). Positions 1113-1123 (SKSEREKESKK) are enriched in basic and acidic residues.

Belongs to the activator 1 large subunit family. As to quaternary structure, large subunit of the RFC complex, an heteropentameric complex consisting of RFC1 and four small subunits RFC2, RFC3, RFC4 and RFC5; the RFC complex interacts with PCNA and the interaction involves RFC1.

The protein resides in the nucleus. Functionally, subunit of the replication factor C (RFC) complex which acts during elongation of primed DNA templates by DNA polymerases delta and epsilon, and is necessary for ATP-dependent loading of proliferating cell nuclear antigen (PCNA) onto primed DNA. This subunit binds to the primer-template junction. Binds the PO-B transcription element as well as other GA rich DNA sequences. Can bind single- or double-stranded DNA. The chain is Replication factor C subunit 1 (Rfc1) from Mus musculus (Mouse).